Reading from the N-terminus, the 347-residue chain is Holliday junction branch migration complex subunit RuvB (347 aa).

The tract at residues 13-195 is large ATPase domain (RuvB-L); the sequence is NEDAVTSGEV…FGIVEHMQYY (183 aa). ATP-binding positions include Leu34, Arg35, Gly76, Lys79, Thr80, Thr81, 142-144, Arg185, Tyr195, and Arg232; that span reads EDY. Residue Thr80 participates in Mg(2+) binding. The small ATPAse domain (RuvB-S) stretch occupies residues 196–266; sequence TIDELEKIVQ…TTEGALKQLQ (71 aa). A head domain (RuvB-H) region spans residues 269–347; the sequence is DEGLDQTDRR…QLGLPVPGDK (79 aa). Arg329 contributes to the DNA binding site.

This sequence belongs to the RuvB family. In terms of assembly, homohexamer. Forms an RuvA(8)-RuvB(12)-Holliday junction (HJ) complex. HJ DNA is sandwiched between 2 RuvA tetramers; dsDNA enters through RuvA and exits via RuvB. An RuvB hexamer assembles on each DNA strand where it exits the tetramer. Each RuvB hexamer is contacted by two RuvA subunits (via domain III) on 2 adjacent RuvB subunits; this complex drives branch migration. In the full resolvosome a probable DNA-RuvA(4)-RuvB(12)-RuvC(2) complex forms which resolves the HJ.

The protein localises to the cytoplasm. It carries out the reaction ATP + H2O = ADP + phosphate + H(+). Its function is as follows. The RuvA-RuvB-RuvC complex processes Holliday junction (HJ) DNA during genetic recombination and DNA repair, while the RuvA-RuvB complex plays an important role in the rescue of blocked DNA replication forks via replication fork reversal (RFR). RuvA specifically binds to HJ cruciform DNA, conferring on it an open structure. The RuvB hexamer acts as an ATP-dependent pump, pulling dsDNA into and through the RuvAB complex. RuvB forms 2 homohexamers on either side of HJ DNA bound by 1 or 2 RuvA tetramers; 4 subunits per hexamer contact DNA at a time. Coordinated motions by a converter formed by DNA-disengaged RuvB subunits stimulates ATP hydrolysis and nucleotide exchange. Immobilization of the converter enables RuvB to convert the ATP-contained energy into a lever motion, pulling 2 nucleotides of DNA out of the RuvA tetramer per ATP hydrolyzed, thus driving DNA branch migration. The RuvB motors rotate together with the DNA substrate, which together with the progressing nucleotide cycle form the mechanistic basis for DNA recombination by continuous HJ branch migration. Branch migration allows RuvC to scan DNA until it finds its consensus sequence, where it cleaves and resolves cruciform DNA. This is Holliday junction branch migration complex subunit RuvB from Lactobacillus helveticus (strain DPC 4571).